A 310-amino-acid chain; its full sequence is HTH-type transcriptional activator TtdR (310 aa).

The region spanning 6 to 63 is the HTH lysR-type domain; it reads PLAKDLQVLVEIVHSGSFSAAAATLGQTPAFVTKRIQILENTLATTLLNRSARGVALT. The segment at residues 23-42 is a DNA-binding region (H-T-H motif); sequence FSAAAATLGQTPAFVTKRIQ.

It belongs to the LysR transcriptional regulatory family.

Its function is as follows. Positive regulator required for L-tartrate-dependent anaerobic growth on glycerol. Induces expression of the ttdA-ttdB-ygjE operon. The sequence is that of HTH-type transcriptional activator TtdR (ttdR) from Escherichia coli (strain K12).